Reading from the N-terminus, the 253-residue chain is MRIKFLVVLAVICLLAHYASASGMGGDKKPKDAPKPKDAPKPKEVKPVKADSSEYEIEVIKHQKEKTEKKEKEKKAHVEIKKKIKNKEKKFVPCSEILKDEKLECEKNATPGYKALFEFKESESFCEWECDYEAIPGAKKDEKKEKKVVKVIKPPKEKPPKKPRKECSGEKVIKFQNCLVKIRGLIAFGDKTKNFDKKFAKLVQGKQKKGAKKAKGGKKAEPKPGPKPAPKPGPKPAPKPVPKPADKPKDAKK.

The signal sequence occupies residues Met-1–Ala-21. 3 disordered regions span residues Gly-23–Asp-51, Lys-140–Ser-168, and Val-203–Lys-253. Basic and acidic residues-rich tracts occupy residues Gly-26–Asp-51 and Pro-154–Ser-168. A run of 2 repeats spans residues Lys-29–Pro-34 and Lys-35–Pro-40. Residues Lys-29–Pro-47 are 3 X 6 AA approximate tandem repeats of K-P-K-D-A-P. The 1-3; approximate repeat unit spans residues Lys-41–Pro-47. 2 consecutive repeat copies span residues Lys-153 to Lys-156 and Lys-158 to Lys-161. Residues Lys-153–Glu-166 are 3 X 4 AA approximate tandem repeats of K-P-P-K. The 2-3; approximate repeat unit spans residues Lys-162–Glu-166. Positions Lys-206–Gly-217 are enriched in basic residues. Repeat copies occupy residues Pro-222 to Gly-225, Pro-226 to Ala-229, Pro-230 to Gly-233, Pro-234 to Ala-237, Pro-238 to Val-241, and Pro-242 to Ala-245. A 7 X 4 AA approximate tandem repeats of P-K-P-[GAV] region spans residues Pro-222 to Lys-249. Pro residues predominate over residues Gly-225–Lys-243. The segment covering Pro-244–Lys-253 has biased composition (basic and acidic residues). A 3-7; approximate repeat occupies Asp-246 to Lys-249.

As to expression, salivary gland.

It localises to the secreted. Its function is as follows. Used by the larvae to construct a supramolecular structure, the larval tube. This Chironomus tentans (Midge) protein is Salivary gland SP38-40.B protein (SP38-40.B).